The sequence spans 214 residues: Putative pyrophosphatase PpaX (214 aa).

The active-site Nucleophile is aspartate 8.

The protein belongs to the HAD-like hydrolase superfamily. PpaX family. Requires Mg(2+) as cofactor.

The catalysed reaction is diphosphate + H2O = 2 phosphate + H(+). In Clostridium perfringens (strain 13 / Type A), this protein is Putative pyrophosphatase PpaX.